Consider the following 331-residue polypeptide: Probable allantoicase (331 aa).

This sequence belongs to the allantoicase family.

The enzyme catalyses allantoate + H2O = (S)-ureidoglycolate + urea. It participates in nitrogen metabolism; (S)-allantoin degradation; (S)-ureidoglycolate from allantoate (aminidohydrolase route): step 1/1. This Pseudomonas syringae pv. syringae (strain B728a) protein is Probable allantoicase.